Consider the following 88-residue polypeptide: Small ribosomal subunit protein uS17 (88 aa).

Belongs to the universal ribosomal protein uS17 family. As to quaternary structure, part of the 30S ribosomal subunit.

One of the primary rRNA binding proteins, it binds specifically to the 5'-end of 16S ribosomal RNA. The protein is Small ribosomal subunit protein uS17 of Pseudomonas savastanoi pv. phaseolicola (strain 1448A / Race 6) (Pseudomonas syringae pv. phaseolicola (strain 1448A / Race 6)).